The sequence spans 183 residues: Holliday junction branch migration complex subunit RuvA (183 aa).

Residues 1-63 (MIVGLIGVVE…EDAHLLYGFL (63 aa)) form a domain I region. Residues 64–139 (EEGEKILFER…FFIQDENRPA (76 aa)) are domain II. Ala139 is a region of interest (flexible linker). A domain III region spans residues 139-183 (ARNEVFLALESLGFKSAEINQVLKTLKPNLSIEAAIKEALQQLRS).

This sequence belongs to the RuvA family. As to quaternary structure, homotetramer. Forms an RuvA(8)-RuvB(12)-Holliday junction (HJ) complex. HJ DNA is sandwiched between 2 RuvA tetramers; dsDNA enters through RuvA and exits via RuvB. An RuvB hexamer assembles on each DNA strand where it exits the tetramer. Each RuvB hexamer is contacted by two RuvA subunits (via domain III) on 2 adjacent RuvB subunits; this complex drives branch migration. In the full resolvosome a probable DNA-RuvA(4)-RuvB(12)-RuvC(2) complex forms which resolves the HJ.

Its subcellular location is the cytoplasm. Its function is as follows. The RuvA-RuvB-RuvC complex processes Holliday junction (HJ) DNA during genetic recombination and DNA repair, while the RuvA-RuvB complex plays an important role in the rescue of blocked DNA replication forks via replication fork reversal (RFR). RuvA specifically binds to HJ cruciform DNA, conferring on it an open structure. The RuvB hexamer acts as an ATP-dependent pump, pulling dsDNA into and through the RuvAB complex. HJ branch migration allows RuvC to scan DNA until it finds its consensus sequence, where it cleaves and resolves the cruciform DNA. This Helicobacter pylori (strain ATCC 700392 / 26695) (Campylobacter pylori) protein is Holliday junction branch migration complex subunit RuvA.